The chain runs to 67 residues: Large ribosomal subunit protein uL29 (67 aa).

This sequence belongs to the universal ribosomal protein uL29 family.

The protein is Large ribosomal subunit protein uL29 of Solibacter usitatus (strain Ellin6076).